The chain runs to 825 residues: AMP deaminase 2 (825 aa).

The segment at 1 to 49 (MASYPSGSGKPKAKYPFKKRASLQASTAAPEARGGLGAPPLQSARSLPG) is disordered. Basic residues predominate over residues 11–21 (PKAKYPFKKRA). Phosphoserine is present on S22. Omega-N-methylarginine is present on R45. Phosphoserine is present on residues S46, S64, and S80. Y91 bears the Phosphotyrosine mark. Phosphoserine is present on residues S97 and S114. Position 134 is a phosphothreonine (T134). Residues S136 and S138 each carry the phosphoserine modification. Zn(2+) contacts are provided by H364 and H366. Residues H366 and 435 to 440 (KFNAKY) contribute to the substrate site. H633 provides a ligand contact to Zn(2+). E636 contributes to the substrate binding site. H655 functions as the Proton acceptor in the catalytic mechanism. D710 contacts Zn(2+). 711-714 (DPLQ) provides a ligand contact to substrate.

The protein belongs to the metallo-dependent hydrolases superfamily. Adenosine and AMP deaminases family. As to quaternary structure, homotetramer. Zn(2+) serves as cofactor. In terms of tissue distribution, highly expressed in cerebellum.

It carries out the reaction AMP + H2O + H(+) = IMP + NH4(+). It participates in purine metabolism; IMP biosynthesis via salvage pathway; IMP from AMP: step 1/1. AMP deaminase plays a critical role in energy metabolism. Catalyzes the deamination of AMP to IMP and plays an important role in the purine nucleotide cycle. The sequence is that of AMP deaminase 2 from Homo sapiens (Human).